The chain runs to 25 residues: Small ribosomal subunit protein eS32B (25 aa).

The interval 1-25 is disordered; the sequence is MRAKWRKKRTRRLKRKRRKVRARSK.

It belongs to the eukaryotic ribosomal protein eS32 family. As to quaternary structure, component of the small ribosomal subunit (SSU). Mature yeast ribosomes consist of a small (40S) and a large (60S) subunit. The 40S small subunit contains 1 molecule of ribosomal RNA (18S rRNA) and 33 different proteins (encoded by 57 genes). The large 60S subunit contains 3 rRNA molecules (25S, 5.8S and 5S rRNA) and 46 different proteins (encoded by 81 genes).

It localises to the cytoplasm. Its function is as follows. Component of the ribosome, a large ribonucleoprotein complex responsible for the synthesis of proteins in the cell. The small ribosomal subunit (SSU) binds messenger RNAs (mRNAs) and translates the encoded message by selecting cognate aminoacyl-transfer RNA (tRNA) molecules. The large subunit (LSU) contains the ribosomal catalytic site termed the peptidyl transferase center (PTC), which catalyzes the formation of peptide bonds, thereby polymerizing the amino acids delivered by tRNAs into a polypeptide chain. The nascent polypeptides leave the ribosome through a tunnel in the LSU and interact with protein factors that function in enzymatic processing, targeting, and the membrane insertion of nascent chains at the exit of the ribosomal tunnel. The chain is Small ribosomal subunit protein eS32B from Saccharomyces cerevisiae (strain ATCC 204508 / S288c) (Baker's yeast).